An 829-amino-acid chain; its full sequence is Dipeptidyl peptidase family member 2 (829 aa).

Residues 1-27 (MENDNYDVEEQGCSVFNGKHGYFARSC) lie on the Cytoplasmic side of the membrane. Residues 28 to 48 (CVVFILIICVIFVFSVIFTFM) form a helical; Signal-anchor for type II membrane protein membrane-spanning segment. At 49–829 (QNPINLNSDN…DCFKSNLDLL (781 aa)) the chain is on the extracellular side. N-linked (GlcNAc...) asparagine glycosylation is found at asparagine 61, asparagine 66, asparagine 183, asparagine 209, asparagine 314, and asparagine 359. Cysteine 514 and cysteine 533 are oxidised to a cystine. The Charge relay system role is filled by serine 691. A disulfide bond links cysteine 711 and cysteine 821. N-linked (GlcNAc...) asparagine glycosylation occurs at asparagine 754. Residues aspartate 768 and histidine 800 each act as charge relay system in the active site.

This sequence belongs to the peptidase S9B family. DPPIV subfamily.

It localises to the cell membrane. Functionally, removes N-terminal dipeptides sequentially from polypeptides. Essential for control of distal tip cell migration. This is Dipeptidyl peptidase family member 2 (dpf-2) from Caenorhabditis elegans.